The following is a 251-amino-acid chain: 2,3-bisphosphoglycerate-dependent phosphoglycerate mutase (251 aa).

Substrate contacts are provided by residues Arg11–Asn18, Thr24–Gly25, Arg63, Glu90–Tyr93, Lys101, Arg117–Arg118, and Gly185–Asn186. His12 acts as the Tele-phosphohistidine intermediate in catalysis. The active-site Proton donor/acceptor is the Glu90. The interval Arg117–Ala142 is disordered.

Belongs to the phosphoglycerate mutase family. BPG-dependent PGAM subfamily.

It carries out the reaction (2R)-2-phosphoglycerate = (2R)-3-phosphoglycerate. Its pathway is carbohydrate degradation; glycolysis; pyruvate from D-glyceraldehyde 3-phosphate: step 3/5. Its function is as follows. Catalyzes the interconversion of 2-phosphoglycerate and 3-phosphoglycerate. The polypeptide is 2,3-bisphosphoglycerate-dependent phosphoglycerate mutase (Clavibacter michiganensis subsp. michiganensis (strain NCPPB 382)).